The chain runs to 132 residues: MAFDGTWKVDRNENYEKFMEKMGINVVKRKLAAHDNLKLIITQEGNKFTVKESSTFRSIEIIFELGVTFNYSLADGTELSGAWALEGDKLVGKFKRLDNGNALNTVREIIGGEMVQTYTYEGVEAKRIFKKE.

Ala2 bears the N-acetylalanine mark. 2 residues coordinate hexadecanoate: Trp83 and Arg107. Trp83 and Arg107 together coordinate tetradecanoate.

It belongs to the calycin superfamily. Fatty-acid binding protein (FABP) family.

It localises to the cytoplasm. FABPs are thought to play a role in the intracellular transport of long-chain fatty acids and their acyl-CoA esters. FABP2 is probably involved in triglyceride-rich lipoprotein synthesis. Binds saturated long-chain fatty acids with a high affinity, but binds with a lower affinity to unsaturated long-chain fatty acids. FABP2 may also help maintain energy homeostasis by functioning as a lipid sensor. The sequence is that of Fatty acid-binding protein, intestinal (FABP2) from Bos taurus (Bovine).